Here is a 489-residue protein sequence, read N- to C-terminus: Pup--protein ligase (489 aa).

Glutamate 25 contributes to the Mg(2+) binding site. Arginine 69 contacts ATP. Position 71 (tyrosine 71) interacts with Mg(2+). The active-site Proton acceptor is aspartate 73. Position 79 (glutamate 79) interacts with Mg(2+). Positions 82 and 447 each coordinate ATP.

Belongs to the Pup ligase/Pup deamidase family. Pup-conjugating enzyme subfamily.

It catalyses the reaction ATP + [prokaryotic ubiquitin-like protein]-L-glutamate + [protein]-L-lysine = ADP + phosphate + N(6)-([prokaryotic ubiquitin-like protein]-gamma-L-glutamyl)-[protein]-L-lysine.. The protein operates within protein degradation; proteasomal Pup-dependent pathway. Its pathway is protein modification; protein pupylation. Catalyzes the covalent attachment of the prokaryotic ubiquitin-like protein modifier Pup to the proteasomal substrate proteins, thereby targeting them for proteasomal degradation. This tagging system is termed pupylation. The ligation reaction involves the side-chain carboxylate of the C-terminal glutamate of Pup and the side-chain amino group of a substrate lysine. This chain is Pup--protein ligase, found in Corynebacterium efficiens (strain DSM 44549 / YS-314 / AJ 12310 / JCM 11189 / NBRC 100395).